Consider the following 277-residue polypeptide: Large ribosomal subunit protein uL2 (277 aa).

The disordered stretch occupies residues 223 to 277 (VAMNPVDHPHGGGEGRTSTGRHPVTPWGKRTLGKKTRKRKASDKYIIRSRRARKR). The span at 253 to 277 (TLGKKTRKRKASDKYIIRSRRARKR) shows a compositional bias: basic residues.

This sequence belongs to the universal ribosomal protein uL2 family. Part of the 50S ribosomal subunit. Forms a bridge to the 30S subunit in the 70S ribosome.

Functionally, one of the primary rRNA binding proteins. Required for association of the 30S and 50S subunits to form the 70S ribosome, for tRNA binding and peptide bond formation. It has been suggested to have peptidyltransferase activity; this is somewhat controversial. Makes several contacts with the 16S rRNA in the 70S ribosome. This Halothermothrix orenii (strain H 168 / OCM 544 / DSM 9562) protein is Large ribosomal subunit protein uL2.